A 437-amino-acid polypeptide reads, in one-letter code: Acyl-coenzyme A thioesterase 9, mitochondrial (437 aa).

A mitochondrion-targeting transit peptide spans 1-21 (MRRAALRLCTLSKGLLAPSRG). HotDog ACOT-type domains lie at 84–207 (SYIE…RDSE) and 287–399 (ENSK…EKEV). Lysine 101 is modified (N6-acetyllysine).

This sequence belongs to the acyl coenzyme A hydrolase family. Interacts with NYAP1, NYAP2 and MYO16.

The protein resides in the mitochondrion. It is found in the mitochondrion matrix. Its subcellular location is the mitochondrion inner membrane. It carries out the reaction butanoyl-CoA + H2O = butanoate + CoA + H(+). The enzyme catalyses propanoyl-CoA + H2O = propanoate + CoA + H(+). The catalysed reaction is hexadecanoyl-CoA + H2O = hexadecanoate + CoA + H(+). It catalyses the reaction octanoyl-CoA + H2O = octanoate + CoA + H(+). It carries out the reaction decanoyl-CoA + H2O = decanoate + CoA + H(+). The enzyme catalyses tetradecanoyl-CoA + H2O = tetradecanoate + CoA + H(+). The catalysed reaction is 4,8-dimethylnonanoyl-CoA + H2O = 4,8-dimethylnonanoate + CoA + H(+). It catalyses the reaction 3-methylbutanoyl-CoA + H2O = 3-methylbutanoate + CoA + H(+). It carries out the reaction 2-methylpropanoyl-CoA + H2O = 2-methylpropanoate + CoA + H(+). The protein operates within lipid metabolism; fatty acid metabolism. With respect to regulation, strongly inhibited by NADH and CoA. Functionally, mitochondrial acyl-CoA thioesterase. Catalyzes the hydrolysis of acyl-CoAs into free fatty acids and coenzyme A (CoA), regulating their respective intracellular levels. Regulates both mitochondrial lipid and amino acid metabolism. This Bos taurus (Bovine) protein is Acyl-coenzyme A thioesterase 9, mitochondrial (ACOT9).